A 96-amino-acid chain; its full sequence is DNA/RNA-binding protein Alba (96 aa).

This sequence belongs to the histone-like Alba family.

Its subcellular location is the cytoplasm. The protein resides in the chromosome. Binds double-stranded DNA tightly but without sequence specificity. Involved in DNA compaction. In Methanocella arvoryzae (strain DSM 22066 / NBRC 105507 / MRE50), this protein is DNA/RNA-binding protein Alba.